The sequence spans 252 residues: Imidazole glycerol phosphate synthase subunit HisF (252 aa).

Residues D11 and D130 contribute to the active site.

This sequence belongs to the HisA/HisF family. Heterodimer of HisH and HisF.

It localises to the cytoplasm. The catalysed reaction is 5-[(5-phospho-1-deoxy-D-ribulos-1-ylimino)methylamino]-1-(5-phospho-beta-D-ribosyl)imidazole-4-carboxamide + L-glutamine = D-erythro-1-(imidazol-4-yl)glycerol 3-phosphate + 5-amino-1-(5-phospho-beta-D-ribosyl)imidazole-4-carboxamide + L-glutamate + H(+). It functions in the pathway amino-acid biosynthesis; L-histidine biosynthesis; L-histidine from 5-phospho-alpha-D-ribose 1-diphosphate: step 5/9. IGPS catalyzes the conversion of PRFAR and glutamine to IGP, AICAR and glutamate. The HisF subunit catalyzes the cyclization activity that produces IGP and AICAR from PRFAR using the ammonia provided by the HisH subunit. This chain is Imidazole glycerol phosphate synthase subunit HisF, found in Acinetobacter baumannii (strain AB307-0294).